A 184-amino-acid polypeptide reads, in one-letter code: Large ribosomal subunit protein uL5 (184 aa).

It belongs to the universal ribosomal protein uL5 family. Part of the 50S ribosomal subunit; part of the 5S rRNA/L5/L18/L25 subcomplex. Contacts the 5S rRNA and the P site tRNA. Forms a bridge to the 30S subunit in the 70S ribosome.

This is one of the proteins that bind and probably mediate the attachment of the 5S RNA into the large ribosomal subunit, where it forms part of the central protuberance. In the 70S ribosome it contacts protein S13 of the 30S subunit (bridge B1b), connecting the 2 subunits; this bridge is implicated in subunit movement. Contacts the P site tRNA; the 5S rRNA and some of its associated proteins might help stabilize positioning of ribosome-bound tRNAs. The protein is Large ribosomal subunit protein uL5 of Syntrophotalea carbinolica (strain DSM 2380 / NBRC 103641 / GraBd1) (Pelobacter carbinolicus).